The primary structure comprises 220 residues: Small ribosomal subunit protein uS3 (220 aa).

In terms of domain architecture, KH type-2 spans 24–93; the sequence is IKEFLEYRLS…NPQIDVIDVS (70 aa).

It belongs to the universal ribosomal protein uS3 family. Part of the 30S ribosomal subunit.

Functionally, binds the lower part of the 30S subunit head. The chain is Small ribosomal subunit protein uS3 from Pyrobaculum arsenaticum (strain DSM 13514 / JCM 11321 / PZ6).